We begin with the raw amino-acid sequence, 173 residues long: Large ribosomal subunit protein uL18 (173 aa).

Belongs to the universal ribosomal protein uL18 family. As to quaternary structure, part of the 50S ribosomal subunit. Contacts the 5S and 23S rRNAs.

This is one of the proteins that bind and probably mediate the attachment of the 5S RNA into the large ribosomal subunit, where it forms part of the central protuberance. This is Large ribosomal subunit protein uL18 from Methanococcoides burtonii (strain DSM 6242 / NBRC 107633 / OCM 468 / ACE-M).